The following is a 188-amino-acid chain: Elongation factor P (188 aa).

The protein belongs to the elongation factor P family.

Its subcellular location is the cytoplasm. It functions in the pathway protein biosynthesis; polypeptide chain elongation. In terms of biological role, involved in peptide bond synthesis. Stimulates efficient translation and peptide-bond synthesis on native or reconstituted 70S ribosomes in vitro. Probably functions indirectly by altering the affinity of the ribosome for aminoacyl-tRNA, thus increasing their reactivity as acceptors for peptidyl transferase. The protein is Elongation factor P of Streptomyces coelicolor (strain ATCC BAA-471 / A3(2) / M145).